A 515-amino-acid chain; its full sequence is Bifunctional purine biosynthesis protein PurH (515 aa).

The MGS-like domain occupies M1–V145.

The protein belongs to the PurH family.

It catalyses the reaction (6R)-10-formyltetrahydrofolate + 5-amino-1-(5-phospho-beta-D-ribosyl)imidazole-4-carboxamide = 5-formamido-1-(5-phospho-D-ribosyl)imidazole-4-carboxamide + (6S)-5,6,7,8-tetrahydrofolate. The catalysed reaction is IMP + H2O = 5-formamido-1-(5-phospho-D-ribosyl)imidazole-4-carboxamide. It functions in the pathway purine metabolism; IMP biosynthesis via de novo pathway; 5-formamido-1-(5-phospho-D-ribosyl)imidazole-4-carboxamide from 5-amino-1-(5-phospho-D-ribosyl)imidazole-4-carboxamide (10-formyl THF route): step 1/1. The protein operates within purine metabolism; IMP biosynthesis via de novo pathway; IMP from 5-formamido-1-(5-phospho-D-ribosyl)imidazole-4-carboxamide: step 1/1. The protein is Bifunctional purine biosynthesis protein PurH of Streptococcus mutans serotype c (strain ATCC 700610 / UA159).